The following is a 170-amino-acid chain: Lipoprotein signal peptidase (170 aa).

The next 3 membrane-spanning stretches (helical) occupy residues 12 to 32, 67 to 87, and 94 to 113; these read WYWV…WVLS, WQRW…SVWL, and MWRL…GNLI. Active-site residues include Asp-123 and Asp-141. A helical transmembrane segment spans residues 139–159; sequence IADSAICVGAGLIILDSFVAG.

This sequence belongs to the peptidase A8 family.

The protein resides in the cell inner membrane. The catalysed reaction is Release of signal peptides from bacterial membrane prolipoproteins. Hydrolyzes -Xaa-Yaa-Zaa-|-(S,diacylglyceryl)Cys-, in which Xaa is hydrophobic (preferably Leu), and Yaa (Ala or Ser) and Zaa (Gly or Ala) have small, neutral side chains.. It functions in the pathway protein modification; lipoprotein biosynthesis (signal peptide cleavage). Its function is as follows. This protein specifically catalyzes the removal of signal peptides from prolipoproteins. The protein is Lipoprotein signal peptidase of Shewanella pealeana (strain ATCC 700345 / ANG-SQ1).